Consider the following 133-residue polypeptide: Large-conductance mechanosensitive channel (133 aa).

The next 2 membrane-spanning stretches (helical) occupy residues 14–34 (VVDL…VSSL) and 67–87 (GNFI…FMFV).

It belongs to the MscL family. As to quaternary structure, homopentamer.

It is found in the cell membrane. Channel that opens in response to stretch forces in the membrane lipid bilayer. May participate in the regulation of osmotic pressure changes within the cell. The sequence is that of Large-conductance mechanosensitive channel from Bacillus cereus (strain AH187).